A 1927-amino-acid polypeptide reads, in one-letter code: Integrin beta-like protein A (1927 aa).

The N-terminal stretch at 1–20 is a signal peptide; that stretch reads MNRILTLFILFISLFIVCEA. The Extracellular segment spans residues 21 to 1860; that stretch reads THFRFGTMSW…KENNNKTVLT (1840 aa). N-linked (GlcNAc...) asparagine glycosylation occurs at asparagine 309. The region spanning 425–462 is the EGF-like domain; sequence YGEKCDPVDPCVNGESNEGSQGNGKCTCYYGWEGKNCD. Intrachain disulfides connect cysteine 435/cysteine 450 and cysteine 452/cysteine 461. The VWFA domain maps to 522–709; sequence EVLVLVDSQP…VLSKAVVKAI (188 aa). 5 N-linked (GlcNAc...) asparagine glycosylation sites follow: asparagine 1122, asparagine 1516, asparagine 1717, asparagine 1723, and asparagine 1855. The chain crosses the membrane as a helical span at residues 1861–1881; sequence GAIAGAAAGAGLLAAGAWFLL. Residues 1882–1927 lie on the Cytoplasmic side of the membrane; the sequence is KKSAPPTDAFFGEGAFADGAVSTNPMYEESGRSAINPLYEASSENL.

It belongs to the SIB family. As to quaternary structure, interacts with talA/talin.

The protein localises to the membrane. Functionally, implicated in cellular adhesion to substrate or phagocytic particles. This chain is Integrin beta-like protein A (sibA), found in Dictyostelium discoideum (Social amoeba).